The following is a 242-amino-acid chain: ATP-dependent dethiobiotin synthetase BioD (242 aa).

12–17 (EVGKTV) contributes to the ATP binding site. Position 16 (threonine 16) interacts with Mg(2+). The active site involves lysine 37. Serine 41 serves as a coordination point for substrate. ATP-binding positions include aspartate 51 and 112–115 (EGAG). Mg(2+) contacts are provided by aspartate 51 and glutamate 112.

The protein belongs to the dethiobiotin synthetase family. In terms of assembly, homodimer. Mg(2+) serves as cofactor.

Its subcellular location is the cytoplasm. It catalyses the reaction (7R,8S)-7,8-diammoniononanoate + CO2 + ATP = (4R,5S)-dethiobiotin + ADP + phosphate + 3 H(+). It participates in cofactor biosynthesis; biotin biosynthesis; biotin from 7,8-diaminononanoate: step 1/2. Its function is as follows. Catalyzes a mechanistically unusual reaction, the ATP-dependent insertion of CO2 between the N7 and N8 nitrogen atoms of 7,8-diaminopelargonic acid (DAPA, also called 7,8-diammoniononanoate) to form a ureido ring. This Bacillus thuringiensis subsp. konkukian (strain 97-27) protein is ATP-dependent dethiobiotin synthetase BioD.